The following is a 307-amino-acid chain: Ribonuclease Z (307 aa).

Residues His-63, His-65, Asp-67, His-68, His-141, Asp-212, and His-270 each contribute to the Zn(2+) site. Asp-67 serves as the catalytic Proton acceptor.

This sequence belongs to the RNase Z family. As to quaternary structure, homodimer. Zn(2+) is required as a cofactor.

The enzyme catalyses Endonucleolytic cleavage of RNA, removing extra 3' nucleotides from tRNA precursor, generating 3' termini of tRNAs. A 3'-hydroxy group is left at the tRNA terminus and a 5'-phosphoryl group is left at the trailer molecule.. Functionally, zinc phosphodiesterase, which displays some tRNA 3'-processing endonuclease activity. Probably involved in tRNA maturation, by removing a 3'-trailer from precursor tRNA. This is Ribonuclease Z from Bacillus anthracis (strain A0248).